The following is a 311-amino-acid chain: Methionyl-tRNA formyltransferase (311 aa).

Serine 109 to proline 112 contributes to the (6S)-5,6,7,8-tetrahydrofolate binding site.

The protein belongs to the Fmt family.

The catalysed reaction is L-methionyl-tRNA(fMet) + (6R)-10-formyltetrahydrofolate = N-formyl-L-methionyl-tRNA(fMet) + (6S)-5,6,7,8-tetrahydrofolate + H(+). In terms of biological role, attaches a formyl group to the free amino group of methionyl-tRNA(fMet). The formyl group appears to play a dual role in the initiator identity of N-formylmethionyl-tRNA by promoting its recognition by IF2 and preventing the misappropriation of this tRNA by the elongation apparatus. This chain is Methionyl-tRNA formyltransferase, found in Kosmotoga olearia (strain ATCC BAA-1733 / DSM 21960 / TBF 19.5.1).